Consider the following 291-residue polypeptide: Small ribosomal subunit biogenesis GTPase RsgA (291 aa).

The 159-residue stretch at asparagine 63–leucine 221 folds into the CP-type G domain. GTP is bound by residues threonine 112–aspartate 115 and glycine 164–threonine 172. Residues cysteine 245, cysteine 250, histidine 252, and cysteine 258 each contribute to the Zn(2+) site.

This sequence belongs to the TRAFAC class YlqF/YawG GTPase family. RsgA subfamily. In terms of assembly, monomer. Associates with 30S ribosomal subunit, binds 16S rRNA. Zn(2+) serves as cofactor.

The protein localises to the cytoplasm. Functionally, one of several proteins that assist in the late maturation steps of the functional core of the 30S ribosomal subunit. Helps release RbfA from mature subunits. May play a role in the assembly of ribosomal proteins into the subunit. Circularly permuted GTPase that catalyzes slow GTP hydrolysis, GTPase activity is stimulated by the 30S ribosomal subunit. The polypeptide is Small ribosomal subunit biogenesis GTPase RsgA (Staphylococcus epidermidis (strain ATCC 12228 / FDA PCI 1200)).